We begin with the raw amino-acid sequence, 129 residues long: M-zodatoxin-Lt8j (129 aa).

The N-terminal stretch at 1–20 is a signal peptide; it reads MKYFVVALALVAAFACIAES. A propeptide spanning residues 21–60 is cleaved from the precursor; that stretch reads KPAESEHELAEVEEENELADLEDAVWLEHLADLSDLEEAR.

It belongs to the cationic peptide 06 (cytoinsectotoxin) family. As to expression, expressed by the venom gland.

The protein localises to the secreted. Its function is as follows. Insecticidal, cytolytic and antimicrobial peptide. Forms voltage-dependent, ion-permeable channels in membranes. At high concentration causes cell membrane lysis. This is M-zodatoxin-Lt8j (cit 1-9) from Lachesana tarabaevi (Spider).